The primary structure comprises 471 residues: Ribonuclease 3 (471 aa).

A compositionally biased stretch (basic residues) spans 1-10 (MGSKVAGKKK). 2 disordered regions span residues 1–29 (MGSK…RENI) and 168–189 (NLNE…PTKA). Positions 20–29 (ENGSQQRENI) are enriched in polar residues. Over residues 172–184 (KEDEEEDEGEDSY) the composition is skewed to acidic residues. The RNase III domain maps to 227 to 331 (LSGSEMINAH…YIGGLMEDDP (105 aa)). The DRBM domain occupies 369-437 (NAKRQLYSLI…AENALRDKKM (69 aa)). A disordered region spans residues 451–471 (SESVLKDPSQKNKKRKFSDTS). Positions 461-471 (KNKKRKFSDTS) are enriched in basic residues.

It catalyses the reaction Endonucleolytic cleavage to 5'-phosphomonoester.. DsRNA-specific nuclease that cleaves eukaryotic pre-ribosomal RNA at the U3 snoRNP-dependent A0 site in the 5'-external transcribed spacer (ETS) and in the 3'-ETS. In vitro, cleaves synthetic 5'-ETS RNA A0 site in the absence of snoRNA or other factors. Has an essential growth function in addition to pre-rRNA processing. The chain is Ribonuclease 3 (RNT1) from Saccharomyces cerevisiae (strain ATCC 204508 / S288c) (Baker's yeast).